Here is a 607-residue protein sequence, read N- to C-terminus: Elongation factor 4 (607 aa).

Positions 11-193 (ENIRNFSIIA…KIVEVVPAPD (183 aa)) constitute a tr-type G domain. GTP-binding positions include 23–28 (DHGKST) and 140–143 (NKID).

This sequence belongs to the TRAFAC class translation factor GTPase superfamily. Classic translation factor GTPase family. LepA subfamily.

The protein localises to the cell membrane. The enzyme catalyses GTP + H2O = GDP + phosphate + H(+). In terms of biological role, required for accurate and efficient protein synthesis under certain stress conditions. May act as a fidelity factor of the translation reaction, by catalyzing a one-codon backward translocation of tRNAs on improperly translocated ribosomes. Back-translocation proceeds from a post-translocation (POST) complex to a pre-translocation (PRE) complex, thus giving elongation factor G a second chance to translocate the tRNAs correctly. Binds to ribosomes in a GTP-dependent manner. The polypeptide is Elongation factor 4 (Staphylococcus aureus (strain USA300)).